The chain runs to 253 residues: Trypsin beta (253 aa).

Positions 1-22 are cleaved as a signal peptide; sequence MLKFVILLSAVACALGGTIPEG. Residues 23 to 30 constitute a propeptide, activation peptide; sequence LLPQLDGR. The Peptidase S1 domain maps to 31–253; that stretch reads IVGGTATTIS…DLRSWVINNA (223 aa). Cys-56 and Cys-72 are disulfide-bonded. Active-site charge relay system residues include His-71 and Asp-116. 2 cysteine pairs are disulfide-bonded: Cys-180-Cys-197 and Cys-206-Cys-230. The active-site Charge relay system is the Ser-210.

This sequence belongs to the peptidase S1 family.

It is found in the secreted. It localises to the extracellular space. It carries out the reaction Preferential cleavage: Arg-|-Xaa, Lys-|-Xaa.. This chain is Trypsin beta (betaTry), found in Drosophila erecta (Fruit fly).